Consider the following 980-residue polypeptide: MAAARAPWLWWWVVVVVGVAVAEAASGGGGGGDGEGKALMGVKAGFGNAANALVDWDGGADHCAWRGVTCDNASFAVLALNLSNLNLGGEISPAIGELKNLQFVDLKGNKLTGQIPDEIGDCISLKYLDLSGNLLYGDIPFSISKLKQLEELILKNNQLTGPIPSTLSQIPNLKTLDLAQNQLTGDIPRLIYWNEVLQYLGLRGNSLTGTLSPDMCQLTGLWYFDVRGNNLTGTIPESIGNCTSFEILDISYNQISGEIPYNIGFLQVATLSLQGNRLTGKIPDVIGLMQALAVLDLSENELVGPIPSILGNLSYTGKLYLHGNKLTGVIPPELGNMSKLSYLQLNDNELVGTIPAELGKLEELFELNLANNNLQGPIPANISSCTALNKFNVYGNKLNGSIPAGFQKLESLTYLNLSSNNFKGNIPSELGHIINLDTLDLSYNEFSGPVPATIGDLEHLLELNLSKNHLDGPVPAEFGNLRSVQVIDMSNNNLSGSLPEELGQLQNLDSLILNNNNLVGEIPAQLANCFSLNNLNLSYNNLSGHVPMAKNFSKFPMESFLGNPLLHVYCQDSSCGHSHGQRVNISKTAIACIILGFIILLCVLLLAIYKTNQPQPLVKGSDKPVQGPPKLVVLQMDMAIHTYEDIMRLTENLSEKYIIGYGASSTVYKCELKSGKAIAVKRLYSQYNHSLREFETELETIGSIRHRNLVSLHGFSLSPHGNLLFYDYMENGSLWDLLHGPSKKVKLNWDTRLRIAVGAAQGLAYLHHDCNPRIIHRDVKSSNILLDENFEAHLSDFGIAKCVPSAKSHASTYVLGTIGYIDPEYARTSRLNEKSDVYSFGIVLLELLTGKKAVDNESNLHQLILSKADDNTVMEAVDSEVSVTCTDMGLVRKAFQLALLCTKRHPSDRPTMHEVARVLLSLLPASAMTTPKTVDYSRLLASTTTAADMRGHDVTDIGDNSSSDEQWFVRFGEVISKHTM.

The N-terminal stretch at 1–24 is a signal peptide; the sequence is MAAARAPWLWWWVVVVVGVAVAEA. Residues 25-588 are Extracellular-facing; that stretch reads ASGGGGGGDG…HGQRVNISKT (564 aa). N-linked (GlcNAc...) asparagine glycosylation is found at N72 and N81. LRR repeat units follow at residues 75–98, 99–122, 124–146, 147–170, 171–194, 196–218, 219–242, 243–265, 266–289, 290–312, 314–337, 338–361, 362–385, 387–408, 409–433, 435–457, 458–480, 481–505, 507–529, and 531–554; these read FAVL…IGEL, KNLQ…IGDC, SLKY…ISKL, KQLE…LSQI, PNLK…IYWN, VLQY…MCQL, TGLW…IGNC, TSFE…NIGF, LQVA…IGLM, QALA…ILGN, SYTG…LGNM, SKLS…LGKL, EELF…ISSC, ALNK…GFQK, LESL…LGHI, NLDT…IGDL, EHLL…EFGN, LRSV…LGQL, NLDS…LANC, and SLNN…NFSK. N-linked (GlcNAc...) asparagine glycans are attached at residues N230 and N241. N-linked (GlcNAc...) asparagine glycans are attached at residues N312 and N336. Residues N381, N399, and N416 are each glycosylated (N-linked (GlcNAc...) asparagine). Residues N464 and N493 are each glycosylated (N-linked (GlcNAc...) asparagine). N-linked (GlcNAc...) asparagine glycosylation is found at N536, N541, N551, and N584. Residues 589–609 form a helical membrane-spanning segment; that stretch reads AIACIILGFIILLCVLLLAIY. Topologically, residues 610–980 are cytoplasmic; the sequence is KTNQPQPLVK…FGEVISKHTM (371 aa). The 271-residue stretch at 653–923 folds into the Protein kinase domain; sequence LSEKYIIGYG…EVARVLLSLL (271 aa). ATP is bound by residues 659–667 and K681; that span reads IGYGASSTV. D778 functions as the Proton acceptor in the catalytic mechanism.

It belongs to the protein kinase superfamily. Ser/Thr protein kinase family. Autophosphorylated. Expressed in nodes, vascular bundles of stems, and anthers.

The protein resides in the cell membrane. It catalyses the reaction L-seryl-[protein] + ATP = O-phospho-L-seryl-[protein] + ADP + H(+). The catalysed reaction is L-threonyl-[protein] + ATP = O-phospho-L-threonyl-[protein] + ADP + H(+). In terms of biological role, receptor kinase involved in salt drought stress responses. Acts as a positive regulator of salt and drought tolerance. May promote salt and drought tolerance through the induction of the activities of antioxidative enzymes, such as peroxidase, superoxide dismutase and catalase. May be involved in the control of stomatal development in leaf epidermis. Possesses kinase activity in vitro. Does not seem to be involved in heat tolerance. The protein is LRR receptor-like serine/threonine-protein kinase SIK1 of Oryza sativa subsp. japonica (Rice).